The following is a 65-amino-acid chain: Large ribosomal subunit protein bL31 (65 aa).

Zn(2+) contacts are provided by cysteine 16, cysteine 18, cysteine 36, and cysteine 39.

This sequence belongs to the bacterial ribosomal protein bL31 family. Type A subfamily. As to quaternary structure, part of the 50S ribosomal subunit. Zn(2+) is required as a cofactor.

In terms of biological role, binds the 23S rRNA. This Campylobacter jejuni subsp. doylei (strain ATCC BAA-1458 / RM4099 / 269.97) protein is Large ribosomal subunit protein bL31.